A 227-amino-acid polypeptide reads, in one-letter code: N-acetyltransferase 8B (227 aa).

Residues 1–42 (MAPYHIRKYQESDRKSVVGLLSGGMAEHAPATFRRLLKLPRT) lie on the Cytoplasmic side of the membrane. The chain crosses the membrane as a helical; Signal-anchor for type II membrane protein span at residues 43–63 (LILLLGGALALLLVSGSWILA). Residues 61–214 (ILALVFSLSL…ARLVDLHTVH (154 aa)) form the N-acetyltransferase domain. Topologically, residues 64–227 (LVFSLSLLPA…HLPSAQAGRL (164 aa)) are lumenal. Lysine 99 carries the N6-acetyllysine modification.

The protein belongs to the NAT8 family. In terms of processing, acetylation on Lys-99 modulates enzymatic activity.

It is found in the endoplasmic reticulum-Golgi intermediate compartment membrane. The protein resides in the endoplasmic reticulum membrane. The enzyme catalyses L-lysyl-[protein] + acetyl-CoA = N(6)-acetyl-L-lysyl-[protein] + CoA + H(+). Its activity is regulated as follows. Allosterically regulated by acetylation at residue Lys-99. Its function is as follows. Endoplasmic reticulum (ER)-membrane-bound lysine N-acetyltransferase catalyzing the N6-acetylation of lysine residues in the lumen of the ER in various proteins, including PROM1 and BACE1, using acetyl-CoA as acetyl donor. Thereby, may regulate apoptosis through the acetylation and the regulation of the expression of PROM1. Acetylates and stabilizes BACE1 immature protein, leading to increased steady-state levels in neurons. By acting on BACE1 expression, may regulate amyloid beta-peptide formation. N(6)-lysine acetylation in ER maintains protein homeostasis and regulates reticulophagy. The sequence is that of N-acetyltransferase 8B from Homo sapiens (Human).